A 297-amino-acid chain; its full sequence is Golgi-associated RAB2 interactor protein 1A (297 aa).

The tract at residues 226-257 (SNRHQTSRDRHTDTATETDNSGNCKSTPLVAS) is disordered. The span at 240–257 (ATETDNSGNCKSTPLVAS) shows a compositional bias: polar residues.

Belongs to the GARIN family. Interacts (via N-terminus) with RAB2B (in GTP-bound form). As to expression, expressed in testis (at protein level).

The protein resides in the golgi apparatus. RAB2B effector protein required for accurate acrosome formation and normal male fertility. The chain is Golgi-associated RAB2 interactor protein 1A from Mus musculus (Mouse).